Reading from the N-terminus, the 380-residue chain is Cytochrome b (380 aa).

The next 4 membrane-spanning stretches (helical) occupy residues 34–54 (FGSL…LLAM), 78–99 (WLIR…YMHI), 114–134 (WNTG…GYVL), and 179–199 (FFAL…IHLT). Heme b is bound by residues H84 and H98. H183 and H197 together coordinate heme b. Position 202 (H202) interacts with a ubiquinone. A run of 4 helical transmembrane segments spans residues 227-247 (LKDI…ALFS), 289-309 (LGGV…PLLH), 321-341 (LSQL…WIGS), and 348-368 (FIII…ILFP).

This sequence belongs to the cytochrome b family. The cytochrome bc1 complex contains 11 subunits: 3 respiratory subunits (MT-CYB, CYC1 and UQCRFS1), 2 core proteins (UQCRC1 and UQCRC2) and 6 low-molecular weight proteins (UQCRH/QCR6, UQCRB/QCR7, UQCRQ/QCR8, UQCR10/QCR9, UQCR11/QCR10 and a cleavage product of UQCRFS1). This cytochrome bc1 complex then forms a dimer. Heme b is required as a cofactor.

It is found in the mitochondrion inner membrane. Component of the ubiquinol-cytochrome c reductase complex (complex III or cytochrome b-c1 complex) that is part of the mitochondrial respiratory chain. The b-c1 complex mediates electron transfer from ubiquinol to cytochrome c. Contributes to the generation of a proton gradient across the mitochondrial membrane that is then used for ATP synthesis. This is Cytochrome b (MT-CYB) from Hydrobates pelagicus (European storm-petrel).